Reading from the N-terminus, the 107-residue chain is U1-lycotoxin-Ls1f (107 aa).

Positions 1–20 are cleaved as a signal peptide; that stretch reads MMKVLVVVALLVTLISYSSS. Residues 21–41 constitute a propeptide that is removed on maturation; sequence EGIDDLEADELLSLMANEQTR. Cystine bridges form between Cys44–Cys59, Cys51–Cys68, Cys58–Cys86, and Cys70–Cys84.

Belongs to the neurotoxin 19 (CSTX) family. 04 (U1-Lctx) subfamily. In terms of tissue distribution, expressed by the venom gland.

The protein resides in the secreted. In Lycosa singoriensis (Wolf spider), this protein is U1-lycotoxin-Ls1f.